The primary structure comprises 430 residues: Trigger factor (430 aa).

The 86-residue stretch at 157-242 folds into the PPIase FKBP-type domain; that stretch reads GDLVALETWS…AVEVSEPVLP (86 aa).

Belongs to the FKBP-type PPIase family. Tig subfamily.

The protein resides in the cytoplasm. The catalysed reaction is [protein]-peptidylproline (omega=180) = [protein]-peptidylproline (omega=0). Functionally, involved in protein export. Acts as a chaperone by maintaining the newly synthesized protein in an open conformation. Functions as a peptidyl-prolyl cis-trans isomerase. The polypeptide is Trigger factor (Xanthomonas campestris pv. campestris (strain B100)).